The following is a 437-amino-acid chain: Integrase (437 aa).

Positions Trp73 to Tyr158 constitute a Core-binding (CB) domain. The 250-residue stretch at Glu179–Arg428 folds into the Tyr recombinase domain. Residues Arg214, Lys245, His379, Arg382, and Trp405 contribute to the active site. Tyr414 functions as the O-(3'-phospho-DNA)-tyrosine intermediate in the catalytic mechanism.

This sequence belongs to the 'phage' integrase family.

Its function is as follows. Is a recombinase (or integrase), catalyzing the cutting and rejoining of the recombining DNA molecules. This Saccharopolyspora erythraea (Streptomyces erythraeus) protein is Integrase (int).